The following is a 333-amino-acid chain: Biotin synthase (333 aa).

Residues 54-287 (ANHGAIHACS…TKIIKFAAGR (234 aa)) enclose the Radical SAM core domain. [4Fe-4S] cluster is bound by residues cysteine 72, cysteine 76, and cysteine 79. [2Fe-2S] cluster is bound by residues cysteine 151, cysteine 212, and lysine 282.

Belongs to the radical SAM superfamily. Biotin synthase family. In terms of assembly, homodimer. It depends on [4Fe-4S] cluster as a cofactor. [2Fe-2S] cluster serves as cofactor.

The catalysed reaction is (4R,5S)-dethiobiotin + (sulfur carrier)-SH + 2 reduced [2Fe-2S]-[ferredoxin] + 2 S-adenosyl-L-methionine = (sulfur carrier)-H + biotin + 2 5'-deoxyadenosine + 2 L-methionine + 2 oxidized [2Fe-2S]-[ferredoxin]. The protein operates within cofactor biosynthesis; biotin biosynthesis; biotin from 7,8-diaminononanoate: step 2/2. Catalyzes the conversion of dethiobiotin (DTB) to biotin by the insertion of a sulfur atom into dethiobiotin via a radical-based mechanism. In Chlorobaculum tepidum (strain ATCC 49652 / DSM 12025 / NBRC 103806 / TLS) (Chlorobium tepidum), this protein is Biotin synthase.